A 241-amino-acid chain; its full sequence is Leucyl/phenylalanyl-tRNA--protein transferase (241 aa).

The protein belongs to the L/F-transferase family.

The protein localises to the cytoplasm. The enzyme catalyses N-terminal L-lysyl-[protein] + L-leucyl-tRNA(Leu) = N-terminal L-leucyl-L-lysyl-[protein] + tRNA(Leu) + H(+). The catalysed reaction is N-terminal L-arginyl-[protein] + L-leucyl-tRNA(Leu) = N-terminal L-leucyl-L-arginyl-[protein] + tRNA(Leu) + H(+). It carries out the reaction L-phenylalanyl-tRNA(Phe) + an N-terminal L-alpha-aminoacyl-[protein] = an N-terminal L-phenylalanyl-L-alpha-aminoacyl-[protein] + tRNA(Phe). Its function is as follows. Functions in the N-end rule pathway of protein degradation where it conjugates Leu, Phe and, less efficiently, Met from aminoacyl-tRNAs to the N-termini of proteins containing an N-terminal arginine or lysine. This Neisseria meningitidis serogroup C (strain 053442) protein is Leucyl/phenylalanyl-tRNA--protein transferase.